A 600-amino-acid chain; its full sequence is Proline--tRNA ligase (600 aa).

The protein belongs to the class-II aminoacyl-tRNA synthetase family. ProS type 1 subfamily. Homodimer.

Its subcellular location is the cytoplasm. The enzyme catalyses tRNA(Pro) + L-proline + ATP = L-prolyl-tRNA(Pro) + AMP + diphosphate. Functionally, catalyzes the attachment of proline to tRNA(Pro) in a two-step reaction: proline is first activated by ATP to form Pro-AMP and then transferred to the acceptor end of tRNA(Pro). As ProRS can inadvertently accommodate and process non-cognate amino acids such as alanine and cysteine, to avoid such errors it has two additional distinct editing activities against alanine. One activity is designated as 'pretransfer' editing and involves the tRNA(Pro)-independent hydrolysis of activated Ala-AMP. The other activity is designated 'posttransfer' editing and involves deacylation of mischarged Ala-tRNA(Pro). The misacylated Cys-tRNA(Pro) is not edited by ProRS. This is Proline--tRNA ligase from Prochlorococcus marinus (strain MIT 9301).